A 239-amino-acid polypeptide reads, in one-letter code: Ribonuclease 3 (239 aa).

Residues 11–133 (HTAIQKKLGY…MFAAVSFDAD (123 aa)) enclose the RNase III domain. Position 46 (glutamate 46) interacts with Mg(2+). Residue aspartate 50 is part of the active site. Residues aspartate 119 and glutamate 122 each contribute to the Mg(2+) site. Glutamate 122 is a catalytic residue. Residues 160 to 230 (DGKTALQEAL…AKEALKWLEE (71 aa)) enclose the DRBM domain.

This sequence belongs to the ribonuclease III family. Homodimer. Mg(2+) serves as cofactor.

It localises to the cytoplasm. The catalysed reaction is Endonucleolytic cleavage to 5'-phosphomonoester.. Digests double-stranded RNA. Involved in the processing of primary rRNA transcript to yield the immediate precursors to the large and small rRNAs (23S and 16S). Processes some mRNAs, and tRNAs when they are encoded in the rRNA operon. Processes pre-crRNA and tracrRNA of type II CRISPR loci if present in the organism. This is Ribonuclease 3 from Neisseria gonorrhoeae (strain ATCC 700825 / FA 1090).